Here is a 946-residue protein sequence, read N- to C-terminus: Bifunctional glutamine synthetase adenylyltransferase/adenylyl-removing enzyme (946 aa).

The interval 1 to 440 (MKPLSSPLQQ…VFNELIGDDE (440 aa)) is adenylyl removase. Residues 449-946 (SEQWRELWQD…ASWQKWLVEE (498 aa)) are adenylyl transferase.

It belongs to the GlnE family. It depends on Mg(2+) as a cofactor.

It catalyses the reaction [glutamine synthetase]-O(4)-(5'-adenylyl)-L-tyrosine + phosphate = [glutamine synthetase]-L-tyrosine + ADP. The catalysed reaction is [glutamine synthetase]-L-tyrosine + ATP = [glutamine synthetase]-O(4)-(5'-adenylyl)-L-tyrosine + diphosphate. Functionally, involved in the regulation of glutamine synthetase GlnA, a key enzyme in the process to assimilate ammonia. When cellular nitrogen levels are high, the C-terminal adenylyl transferase (AT) inactivates GlnA by covalent transfer of an adenylyl group from ATP to specific tyrosine residue of GlnA, thus reducing its activity. Conversely, when nitrogen levels are low, the N-terminal adenylyl removase (AR) activates GlnA by removing the adenylyl group by phosphorolysis, increasing its activity. The regulatory region of GlnE binds the signal transduction protein PII (GlnB) which indicates the nitrogen status of the cell. This chain is Bifunctional glutamine synthetase adenylyltransferase/adenylyl-removing enzyme, found in Shigella dysenteriae serotype 1 (strain Sd197).